Here is an 86-residue protein sequence, read N- to C-terminus: Large ribosomal subunit protein uL23 (86 aa).

Belongs to the universal ribosomal protein uL23 family. Part of the 50S ribosomal subunit. Contacts protein L29.

Binds to 23S rRNA. One of the proteins that surrounds the polypeptide exit tunnel on the outside of the ribosome. The chain is Large ribosomal subunit protein uL23 from Methanococcus maripaludis (strain DSM 14266 / JCM 13030 / NBRC 101832 / S2 / LL).